The following is a 353-amino-acid chain: Mitochondrial distribution and morphology protein 10 (353 aa).

The protein belongs to the MDM10 family. In terms of assembly, component of the ER-mitochondria encounter structure (ERMES) or MDM complex, composed of MMM1, MDM10, MDM12 and MDM34. Associates with the mitochondrial outer membrane sorting assembly machinery SAM(core) complex.

Its subcellular location is the mitochondrion outer membrane. In terms of biological role, component of the ERMES/MDM complex, which serves as a molecular tether to connect the endoplasmic reticulum and mitochondria. Components of this complex are involved in the control of mitochondrial shape and protein biogenesis and may function in phospholipid exchange. MDM10 is involved in the late assembly steps of the general translocase of the mitochondrial outer membrane (TOM complex). Functions in the TOM40-specific route of the assembly of outer membrane beta-barrel proteins, including the association of TOM40 with the receptor TOM22 and small TOM proteins. Can associate with the SAM(core) complex as well as the MDM12-MMM1 complex, both involved in late steps of the major beta-barrel assembly pathway, that is responsible for biogenesis of all outer membrane beta-barrel proteins. May act as a switch that shuttles between both complexes and channels precursor proteins into the TOM40-specific pathway. Plays a role in mitochondrial morphology and in the inheritance of mitochondria. This is Mitochondrial distribution and morphology protein 10 from Yarrowia lipolytica (strain CLIB 122 / E 150) (Yeast).